The following is a 460-amino-acid chain: Putative arginine/ornithine antiporter (460 aa).

The Cytoplasmic segment spans residues 1-4 (MEKK). The chain crosses the membrane as a helical span at residues 5–25 (LGLSALTALVLSSMLGAGVFS). At 26-38 (LPQNMAAVASPAA) the chain is on the periplasmic side. The helical transmembrane segment at 39–59 (LLIGWGITGAGILLLAFAMLI) threads the bilayer. Residues 60-92 (LTRIRPELDGGIFTYAREGFGELIGFCSAWGYW) are Cytoplasmic-facing. The helical transmembrane segment at 93-113 (LCAVIANVSYLVIVFSALSFF) threads the bilayer. Residues 114-125 (TDTPELRLFGDG) are Periplasmic-facing. The helical transmembrane segment at 126-146 (NTWQSIVGASALLWIVHFLIL) threads the bilayer. At 147-157 (RGVQTAASINL) the chain is on the cytoplasmic side. The helical transmembrane segment at 158-178 (VATLAKLLPLGLFVVLAMMMF) threads the bilayer. At 179-201 (KLDTFKLDFTGLALGVPVWEQVK) the chain is on the periplasmic side. Residues 202-222 (NTMLITLWVFIGVEGAVVVSA) form a helical membrane-spanning segment. At 223–235 (RARNKRDVGKATL) the chain is on the cytoplasmic side. The chain crosses the membrane as a helical span at residues 236–256 (LAVLSALGVYLLVTLLSLGVV). Over 257-282 (ARPELAEIRNPSMAGLMVEMMGPWGE) the chain is Periplasmic. The helical transmembrane segment at 283-303 (IIIAAGLIVSVCGAYLSWTIM) threads the bilayer. Residues 304 to 331 (AAEVPFLAATHKAFPRIFARQNAQAAPS) are Cytoplasmic-facing. A helical transmembrane segment spans residues 332–352 (ASLWLTNICVQICLVLIWLTG). The Periplasmic portion of the chain corresponds to 353-357 (SDYNT). The chain crosses the membrane as a helical span at residues 358–378 (LLTIASEMILVPYFLVGAFLL). Residues 379-384 (KIATRP) lie on the Cytoplasmic side of the membrane. Transmembrane regions (helical) follow at residues 385 to 405 (LHKA…YASG) and 406 to 426 (PMHL…FLYA). At 427–439 (RKTHTHDNVLNRQ) the chain is on the cytoplasmic side. Residues 440-460 (EMVLIGMLLIASVPATWMLVG) traverse the membrane as a helical segment.

The protein belongs to the amino acid-polyamine-organocation (APC) superfamily. Basic amino acid/polyamine antiporter (APA) (TC 2.A.3.2) family.

The protein resides in the cell inner membrane. The catalysed reaction is L-ornithine(in) + L-arginine(out) = L-ornithine(out) + L-arginine(in). In terms of biological role, catalyzes electroneutral exchange between arginine and ornithine to allow high-efficiency energy conversion in the arginine deiminase pathway. The sequence is that of Putative arginine/ornithine antiporter (ydgI) from Escherichia coli O6:H1 (strain CFT073 / ATCC 700928 / UPEC).